A 135-amino-acid chain; its full sequence is MVSFRTMWSVVVVVVVASLASSGVQGRSVEGSSRMERLLSSGSSSSEPLSFLSQDQSVNKRQVFDQACKGIYDRAIFKKLDRVCEDCYNLYRKPYVATTCRQNCYANSVFRQCLDDLLLIDVLDEYISGVQTVGK.

The signal sequence occupies residues 1–26 (MVSFRTMWSVVVVVVVASLASSGVQG). Pyrrolidone carboxylic acid is present on glutamine 62. 3 cysteine pairs are disulfide-bonded: cysteine 68/cysteine 104, cysteine 84/cysteine 100, and cysteine 87/cysteine 113. Valine 133 is modified (valine amide).

This sequence belongs to the arthropod CHH/MIH/GIH/VIH hormone family. As to expression, produced by the medulla terminalis X-organ in the eyestalks and transported to the sinus gland where they are stored and released.

The protein localises to the secreted. In terms of biological role, hormone found in the sinus gland of isopods and decapods which controls the blood sugar level. Has a secretagogue action over the amylase released from the midgut gland. May act as a stress hormone and may be involved in the control of molting and reproduction. This is Crustacean hyperglycemic hormones A* (CHHA*) from Faxonius limosus (Spinycheek crayfish).